A 396-amino-acid chain; its full sequence is Elongation factor Tu-B (396 aa).

Residues 10-206 form the tr-type G domain; that stretch reads KLHVNVGTIG…ALDTFIPDPT (197 aa). The interval 19-26 is G1; it reads GHVDHGKT. 19–26 serves as a coordination point for GTP; sequence GHVDHGKT. Residue Thr-26 participates in Mg(2+) binding. The interval 60–64 is G2; the sequence is GITIS. Residues 81 to 84 are G3; it reads DCPG. Residues 81-85 and 136-139 contribute to the GTP site; these read DCPGH and NKAD. Positions 136–139 are G4; the sequence is NKAD. The G5 stretch occupies residues 174 to 176; it reads SAR.

It belongs to the TRAFAC class translation factor GTPase superfamily. Classic translation factor GTPase family. EF-Tu/EF-1A subfamily. Monomer.

The protein resides in the cytoplasm. It carries out the reaction GTP + H2O = GDP + phosphate + H(+). Functionally, GTP hydrolase that promotes the GTP-dependent binding of aminoacyl-tRNA to the A-site of ribosomes during protein biosynthesis. This chain is Elongation factor Tu-B, found in Xanthomonas campestris pv. campestris (strain ATCC 33913 / DSM 3586 / NCPPB 528 / LMG 568 / P 25).